A 449-amino-acid chain; its full sequence is Hyaluronidase (449 aa).

The N-terminal stretch at 1-23 (MYHIWIKFLAAWIFLKRFNGVHV) is a signal peptide. 2 disulfide bridges follow: cysteine 47/cysteine 340 and cysteine 211/cysteine 227. N-linked (GlcNAc...) asparagine glycans are attached at residues asparagine 67, asparagine 103, and asparagine 111. Glutamate 135 serves as the catalytic Proton donor. Asparagine 153 carries N-linked (GlcNAc...) asparagine glycosylation. N-linked (GlcNAc...) asparagine glycosylation occurs at asparagine 357. 3 cysteine pairs are disulfide-bonded: cysteine 365/cysteine 376, cysteine 370/cysteine 427, and cysteine 429/cysteine 438. N-linked (GlcNAc...) asparagine glycosylation is present at asparagine 401. One can recognise an EGF-like domain in the interval 427–438 (CQCYQGWKGLYC).

The protein belongs to the glycosyl hydrolase 56 family. Monomer. Expressed by the venom gland.

Its subcellular location is the secreted. The enzyme catalyses Random hydrolysis of (1-&gt;4)-linkages between N-acetyl-beta-D-glucosamine and D-glucuronate residues in hyaluronate.. Functionally, snake venom endo-hyaluronidase that degrades hyaluronan to smaller oligosaccharide fragments. In venom, it is not toxic by itself, but increases the diffusion of other venom proteins by degrading the extracellular matrix. In addition, it displays antiedematogenic activity. This is Hyaluronidase from Echis pyramidum leakeyi (Leakey's carpet viper).